We begin with the raw amino-acid sequence, 365 residues long: Eukaryotic translation initiation factor 3 subunit H (365 aa).

An MPN domain is found at 11–160 (VKVEALVVMK…LRAFRLSPKF (150 aa)).

The protein belongs to the eIF-3 subunit H family. In terms of assembly, component of the eukaryotic translation initiation factor 3 (eIF-3) complex.

It localises to the cytoplasm. In terms of biological role, component of the eukaryotic translation initiation factor 3 (eIF-3) complex, which is involved in protein synthesis of a specialized repertoire of mRNAs and, together with other initiation factors, stimulates binding of mRNA and methionyl-tRNAi to the 40S ribosome. The eIF-3 complex specifically targets and initiates translation of a subset of mRNAs involved in cell proliferation. The polypeptide is Eukaryotic translation initiation factor 3 subunit H (Aspergillus terreus (strain NIH 2624 / FGSC A1156)).